Reading from the N-terminus, the 521-residue chain is C-22 sterol desaturase erg5 (521 aa).

The helical transmembrane segment at 30-50 threads the bilayer; it reads AVLNGFTFWKALATLFFAAVI.

This sequence belongs to the cytochrome P450 family. Heme serves as cofactor.

It localises to the endoplasmic reticulum membrane. It catalyses the reaction 5-dehydroepisterol + NADPH + O2 + H(+) = ergosta-5,7,22,24(28)-tetraen-3beta-ol + NADP(+) + 2 H2O. Its pathway is steroid metabolism; ergosterol biosynthesis. Its function is as follows. C-22 sterol desaturase; part of the third module of ergosterol biosynthesis pathway that includes the late steps of the pathway. Erg5 converts 5-dehydroepisterol into ergosta-5,7,22,24(28)-tetraen-3beta-ol by forming the C-22(23) double bond in the sterol side chain. The third module or late pathway involves the ergosterol synthesis itself through consecutive reactions that mainly occur in the endoplasmic reticulum (ER) membrane. Firstly, the squalene synthase erg9 catalyzes the condensation of 2 farnesyl pyrophosphate moieties to form squalene, which is the precursor of all steroids. Squalene synthase is crucial for balancing the incorporation of farnesyl diphosphate (FPP) into sterol and nonsterol isoprene synthesis. Secondly, squalene is converted into lanosterol by the consecutive action of the squalene epoxidase erg1 and the lanosterol synthase erg7. Then, the delta(24)-sterol C-methyltransferase erg6 methylates lanosterol at C-24 to produce eburicol. Eburicol is the substrate of the sterol 14-alpha demethylase encoded by cyp51A and cyp51B, to yield 4,4,24-trimethyl ergosta-8,14,24(28)-trienol. The C-14 reductase erg24 then reduces the C14=C15 double bond which leads to 4,4-dimethylfecosterol. A sequence of further demethylations at C-4, involving the C-4 demethylation complex containing the C-4 methylsterol oxidases erg25A or erg25B, the sterol-4-alpha-carboxylate 3-dehydrogenase erg26 and the 3-keto-steroid reductase erg27, leads to the production of fecosterol via 4-methylfecosterol. The C-8 sterol isomerase erg2 then catalyzes the reaction which results in unsaturation at C-7 in the B ring of sterols and thus converts fecosterol to episterol. The sterol-C5-desaturase erg3B then catalyzes the introduction of a C-5 double bond in the B ring to produce 5-dehydroepisterol. The 2 other sterol-C5-desaturases, erg3A and erg3C, seem to be less important in ergosterol biosynthesis. The C-22 sterol desaturase erg5 further converts 5-dehydroepisterol into ergosta-5,7,22,24(28)-tetraen-3beta-ol by forming the C-22(23) double bond in the sterol side chain. Finally, ergosta-5,7,22,24(28)-tetraen-3beta-ol is substrate of the C-24(28) sterol reductases erg4A and erg4B to produce ergosterol. Possible alternative sterol biosynthetic pathways might exist from fecosterol to ergosterol, depending on the activities of the erg3 isoforms. The protein is C-22 sterol desaturase erg5 of Aspergillus fumigatus (strain ATCC MYA-4609 / CBS 101355 / FGSC A1100 / Af293) (Neosartorya fumigata).